We begin with the raw amino-acid sequence, 368 residues long: Quinolinate synthase (368 aa).

The iminosuccinate site is built by histidine 46 and serine 63. Residue cysteine 110 coordinates [4Fe-4S] cluster. Residues 141 to 143 and serine 162 each bind iminosuccinate; that span reads YVN. Cysteine 230 lines the [4Fe-4S] cluster pocket. Iminosuccinate-binding positions include 256–258 and threonine 273; that span reads HPE. [4Fe-4S] cluster is bound at residue cysteine 320.

This sequence belongs to the quinolinate synthase family. Type 3 subfamily. [4Fe-4S] cluster is required as a cofactor.

Its subcellular location is the cytoplasm. The enzyme catalyses iminosuccinate + dihydroxyacetone phosphate = quinolinate + phosphate + 2 H2O + H(+). It participates in cofactor biosynthesis; NAD(+) biosynthesis; quinolinate from iminoaspartate: step 1/1. In terms of biological role, catalyzes the condensation of iminoaspartate with dihydroxyacetone phosphate to form quinolinate. The polypeptide is Quinolinate synthase (Bacillus anthracis (strain A0248)).